Consider the following 158-residue polypeptide: MAKFTKSLVLCLLLAAFVGAFGAELSEADKANVVNEIAANIQREILKGVKSSETTLTMFLKEMQLKGLPTCGETCFGGTCNTPGCSCSSWPICTRNGLPKRAGVKSSETTLTMFLKEMQLKGLPTCGETCFGGTCNTPGCTCDPWPICTRDGLPSAAA.

The first 22 residues, 1-22, serve as a signal peptide directing secretion; that stretch reads MAKFTKSLVLCLLLAAFVGAFG. The propeptide occupies 23–66; the sequence is AELSEADKANVVNEIAANIQREILKGVKSSETTLTMFLKEMQLK. Residues 67–96 constitute a cross-link (cyclopeptide (Gly-Asn)); that stretch reads GLPTCGETCFGGTCNTPGCSCSSWPICTRN. 3 disulfides stabilise this stretch: cysteine 71–cysteine 85, cysteine 75–cysteine 87, and cysteine 80–cysteine 93. Positions 97–121 are excised as a propeptide; the sequence is GLPKRAGVKSSETTLTMFLKEMQLK. A cross-link (cyclopeptide (Gly-Asp)) is located at residues 122–151; that stretch reads GLPTCGETCFGGTCNTPGCTCDPWPICTRD. Disulfide bonds link cysteine 126–cysteine 140, cysteine 130–cysteine 142, and cysteine 135–cysteine 148. The propeptide occupies 152-158; the sequence is GLPSAAA.

This sequence belongs to the cyclotide family. Moebius subfamily. In terms of processing, kalata-B3 and kalata-B6 are cyclic peptides.

In terms of biological role, probably participates in a plant defense mechanism. Has hemolytic activity. The polypeptide is Kalata-B3/B6 (OAK2) (Oldenlandia affinis).